A 287-amino-acid chain; its full sequence is Transcription initiation factor IIB 1 (287 aa).

The segment at 3-31 (HPHRCPECDGTIRETDTEHVCADCGLVVT) adopts a TFIIB-type zinc-finger fold. Cysteine 7, cysteine 10, cysteine 23, and cysteine 26 together coordinate Zn(2+). The segment covering 40-53 (EWRTFSDDPDHAPE) has biased composition (basic and acidic residues). The interval 40–63 (EWRTFSDDPDHAPERTGAPLTRSR) is disordered. 2 tandem repeats follow at residues 111-194 (TEIR…NRDL) and 205-286 (EYLP…NLTD).

This sequence belongs to the TFIIB family.

Functionally, stabilizes TBP binding to an archaeal box-A promoter. Also responsible for recruiting RNA polymerase II to the pre-initiation complex (DNA-TBP-TFIIB). The chain is Transcription initiation factor IIB 1 from Halobacterium salinarum (strain ATCC 700922 / JCM 11081 / NRC-1) (Halobacterium halobium).